The sequence spans 102 residues: Large ribosomal subunit protein bL21 (102 aa).

The protein belongs to the bacterial ribosomal protein bL21 family. As to quaternary structure, part of the 50S ribosomal subunit. Contacts protein L20.

Its function is as follows. This protein binds to 23S rRNA in the presence of protein L20. The chain is Large ribosomal subunit protein bL21 from Bacillus pumilus (strain SAFR-032).